The sequence spans 512 residues: Opioid growth factor receptor-like protein 1 (512 aa).

3 disordered regions span residues 1–72 (MGNI…ETGT), 323–469 (IWGP…TCCK), and 488–512 (SLSP…GPFT). Composition is skewed to acidic residues over residues 28-54 (GGEE…DNEE) and 62-71 (TNEGGEEETG). Residues 328–337 (DKQKADENKA) show a composition bias toward basic and acidic residues. The span at 347-361 (QKKHSHVEKKSRPAK) shows a compositional bias: basic residues. A compositionally biased stretch (polar residues) spans 408-421 (TVTSENNSSKTGQT). The segment covering 449 to 468 (RSLDTEHDLKRPEADRETCC) has biased composition (basic and acidic residues). Residues 490–499 (SPGTSNSNVT) show a composition bias toward polar residues.

The protein belongs to the opioid growth factor receptor family.

The chain is Opioid growth factor receptor-like protein 1 (ogfrl1) from Xenopus tropicalis (Western clawed frog).